Reading from the N-terminus, the 615-residue chain is Proteasome-associated ATPase (615 aa).

Over residues 1-13 the composition is skewed to basic and acidic residues; the sequence is MSESQRHEAREDG. The interval 1–32 is disordered; sequence MSESQRHEAREDGFTTPHESGLSSEDAAELEE. The stretch at 22–100 forms a coiled coil; that stretch reads LSSEDAAELE…LREEVDRLGQ (79 aa). 302 to 307 serves as a coordination point for ATP; the sequence is GCGKTL. A docks into pockets in the proteasome alpha-ring region spans residues 614–615; it reads YL.

This sequence belongs to the AAA ATPase family. As to quaternary structure, homohexamer. Assembles into a hexameric ring structure that caps the 20S proteasome core. Strongly interacts with the prokaryotic ubiquitin-like protein Pup through a hydrophobic interface; the interacting region of ARC lies in its N-terminal coiled-coil domain. There is one Pup binding site per ARC hexamer ring. Upon ATP-binding, the C-terminus of ARC interacts with the alpha-rings of the proteasome core, possibly by binding to the intersubunit pockets.

Its pathway is protein degradation; proteasomal Pup-dependent pathway. Functionally, ATPase which is responsible for recognizing, binding, unfolding and translocation of pupylated proteins into the bacterial 20S proteasome core particle. May be essential for opening the gate of the 20S proteasome via an interaction with its C-terminus, thereby allowing substrate entry and access to the site of proteolysis. Thus, the C-termini of the proteasomal ATPase may function like a 'key in a lock' to induce gate opening and therefore regulate proteolysis. The sequence is that of Proteasome-associated ATPase from Mycobacterium sp. (strain JLS).